We begin with the raw amino-acid sequence, 1489 residues long: WD repeat-containing protein 7 (1489 aa).

WD repeat units lie at residues 17–56 (APTHCISSILLTDDGGTIVTGCHDGQICLWDVSVELEVNP), 62–104 (GHTA…CIEF), 156–199 (ISPD…SGMQ), 324–366 (VICP…EKQE), 404–443 (NEPLKVTASVYIPAHGRLVCGREDGSIIIVPATQTAIVQL), 462–507 (GHRN…MKHI), and 558–597 (RHLFPIQVIKWRPSDDYLVVGCTDGSVYVWQMDTGALDRC). Disordered regions lie at residues 754 to 783 (IKEHLLDEEEDEEEARRQSREDSDPEYRAS) and 911 to 947 (GDHMKKGPTRPPRPGTPDLSKARDSPPPSSNIVQGQI). Residues 767–782 (EARRQSREDSDPEYRA) are compositionally biased toward basic and acidic residues. Serine 935 carries the post-translational modification Phosphoserine. WD repeat units lie at residues 1350-1389 (PAICRFYMVSYYERSHRIAVGARHGSVALYDIRTGKCQTI) and 1391-1431 (GHKG…LGSI). Serine 1455 carries the phosphoserine modification.

The sequence is that of WD repeat-containing protein 7 (Wdr7) from Mus musculus (Mouse).